Consider the following 171-residue polypeptide: Fetal and adult testis-expressed transcript protein homolog (171 aa).

Disordered stretches follow at residues 1 to 27 (MAGG…QEPS) and 68 to 92 (ANKS…QEGG). A helical transmembrane segment spans residues 151 to 169 (TLFFTMLVSVCVANLWLWL).

As to quaternary structure, interacts with BIK and RNF183. Interacts with IMMT/MIC60and EMD.

It localises to the mitochondrion. The protein resides in the mitochondrion outer membrane. Its subcellular location is the endoplasmic reticulum membrane. Involved in the regulation of endoplasmic reticulum (ER)-mitochondria coupling. Negatively regulates the ER-mitochondria distance and Ca(2+) transfer from ER to mitochondria possibly implicating it in the regulation of apoptosis. May collaborate with RNF183 to restrain BIK protein levels thus regulating apoptotic signaling. The chain is Fetal and adult testis-expressed transcript protein homolog (FATE1) from Sus scrofa (Pig).